Reading from the N-terminus, the 464-residue chain is Endo-1,4-beta-xylanase A (464 aa).

An N-terminal signal peptide occupies residues 1–33 (MFRHHPTRGRRTAGLLAAALATLSAGLTAVAPA). Positions 40-349 (TATLGELAEA…KPAYHAIAAA (310 aa)) constitute a GH10 domain. Catalysis depends on E166, which acts as the Proton donor. Residue E271 is the Nucleophile of the active site. In terms of domain architecture, CBM2 spans 354–457 (SPAPGGNCTA…TPADVTCTPG (104 aa)).

This sequence belongs to the glycosyl hydrolase 10 (cellulase F) family. Does not require any standard metal (Mg(2+), Mn2(+), Ca(2+)). serves as cofactor.

It catalyses the reaction Endohydrolysis of (1-&gt;4)-beta-D-xylosidic linkages in xylans.. The protein operates within glycan degradation; xylan degradation. With respect to regulation, completely inhibited by Hg(2+), unaffected by EDTA. Its function is as follows. Contributes to hydrolysis of hemicellulose, the major component of plant cell-walls. Hydrolyzes xylan to xylose and xylobiose. The protein is Endo-1,4-beta-xylanase A (xynAS9) of Streptomyces sp.